The primary structure comprises 888 residues: Valine--tRNA ligase (888 aa).

A 'HIGH' region motif is present at residues 43-53 (PFTSGTLHLGH). Positions 534 to 538 (KMSKS) match the 'KMSKS' region motif. Lysine 537 serves as a coordination point for ATP.

It belongs to the class-I aminoacyl-tRNA synthetase family. ValS type 2 subfamily.

It is found in the cytoplasm. The enzyme catalyses tRNA(Val) + L-valine + ATP = L-valyl-tRNA(Val) + AMP + diphosphate. Functionally, catalyzes the attachment of valine to tRNA(Val). As ValRS can inadvertently accommodate and process structurally similar amino acids such as threonine, to avoid such errors, it has a 'posttransfer' editing activity that hydrolyzes mischarged Thr-tRNA(Val) in a tRNA-dependent manner. The sequence is that of Valine--tRNA ligase from Thermococcus kodakarensis (strain ATCC BAA-918 / JCM 12380 / KOD1) (Pyrococcus kodakaraensis (strain KOD1)).